Here is a 359-residue protein sequence, read N- to C-terminus: MRAYNFCAGPAALPTAVLEKAQQELLDWQGKGLSIMEMSHRSADYVAVAEKAEADLRKLMNIPENYKVLFLQGGASLQFSAIPLNLLGKNNKADYIHTGIWSEKALKEAKRYGDINVVEAGIKVDGKFAISEQSEWNLSDDAAYVHYADNETIGGLQFAGVPDVKAPLVCDFSSSILSAPLDVSKFGLIYAGAQKNIGPAGLTIVIIRDDLLDQAKAEIPSILKYADQAKNGSMVNTPSTYAWYLSGLVFEWLLEQGGVDAIHKVNLEKAQLLYGYIDSSDFYNNPIAIPNRSIMNVPFTLADEALEKQFLKEAEENHLLNLAGHRSVGGMRASIYNAVPLEGVQALIRFMDDFAKRNG.

Position 41 (arginine 41) interacts with L-glutamate. Pyridoxal 5'-phosphate is bound by residues 75-76 (AS), tryptophan 101, threonine 152, aspartate 171, and glutamine 194. Lysine 195 bears the N6-(pyridoxal phosphate)lysine mark. Pyridoxal 5'-phosphate is bound at residue 236–237 (NT).

The protein belongs to the class-V pyridoxal-phosphate-dependent aminotransferase family. SerC subfamily. As to quaternary structure, homodimer. Requires pyridoxal 5'-phosphate as cofactor.

The protein resides in the cytoplasm. The enzyme catalyses O-phospho-L-serine + 2-oxoglutarate = 3-phosphooxypyruvate + L-glutamate. It carries out the reaction 4-(phosphooxy)-L-threonine + 2-oxoglutarate = (R)-3-hydroxy-2-oxo-4-phosphooxybutanoate + L-glutamate. The protein operates within amino-acid biosynthesis; L-serine biosynthesis; L-serine from 3-phospho-D-glycerate: step 2/3. It functions in the pathway cofactor biosynthesis; pyridoxine 5'-phosphate biosynthesis; pyridoxine 5'-phosphate from D-erythrose 4-phosphate: step 3/5. In terms of biological role, catalyzes the reversible conversion of 3-phosphohydroxypyruvate to phosphoserine and of 3-hydroxy-2-oxo-4-phosphonooxybutanoate to phosphohydroxythreonine. In Acinetobacter baumannii (strain ACICU), this protein is Phosphoserine aminotransferase.